The primary structure comprises 484 residues: Arginine ADP-riboxanase OspC3 (484 aa).

H143, Q144, S145, N155, K157, T169, N172, and T173 together coordinate NAD(+). Residue E326 is part of the active site. ANK repeat units lie at residues 369 to 398, 413 to 444, and 451 to 480; these read MAHQ…FTKQ, NLYD…DVNK, and SGDT…ILGK.

Belongs to the OspC family. As to quaternary structure, interacts with host calmodulin (CALM1, CALM2 and/or CALM3); specifically interacts with the apo form of calmodulin, preventing calcium-binding.

Its subcellular location is the secreted. It is found in the host cytoplasm. It catalyses the reaction L-arginyl-[protein] + NAD(+) = ADP-riboxanated L-argininyl-[protein] + nicotinamide + NH4(+) + H(+). Its activity is regulated as follows. Interaction with host calmodulin (CALM1, CALM2 and/or CALM3) is required to mediate arginine ADP-riboxanation of host caspases. Its function is as follows. ADP-riboxanase effector that inhibits host cell pyroptosis. Acts by mediating arginine ADP-riboxanation of host CASP4/CASP11, blocking CASP4/CASP11 autoprocessing. This prevents CASP4 activation and ability to recognize and cleave GSDMD, thereby inhibiting LPS-induced pyroptosis. ADP-riboxanation takes place in two steps: OspC3 first catalyzes ADP-ribosylation of target Arg, and then initiates a deamination to remove one N-omega group. Independently of its ADP-riboxanase activity, acts as an inhibitor of calcium signaling by inhibiting host calmodulin, preventing activation of the JAK-STAT signaling pathway in response to interferon-beta. Mechanistically, acts by binding to the apo form of calmodulin, preventing calcium-binding and ability to activate host CaMK2 (CAMKII), which is required to stimulate the JAK-STAT signaling pathway in response to interferon-beta. The polypeptide is Arginine ADP-riboxanase OspC3 (Shigella flexneri).